A 142-amino-acid chain; its full sequence is Coactosin-like protein (142 aa).

Ala-2 bears the N-acetylalanine mark. The region spanning Ala-2–Lys-130 is the ADF-H domain. The segment at Thr-66 to Lys-75 is flexible and important for F-actin binding. Lys-102 and Lys-126 each carry N6-acetyllysine.

This sequence belongs to the actin-binding proteins ADF family. Coactosin subfamily. In terms of assembly, interacts with 5-lipoxygenase (ALOX5/5LO) in a calcium-independent manner. Binds to F-actin with a stoichiometry of 1:2. As to expression, widely expressed with highest levels in placenta, lung, kidney and peripheral blood leukocytes and lower levels in brain, liver and pancreas.

The protein resides in the cytoplasm. It is found in the cytoskeleton. Its subcellular location is the nucleus. Binds to F-actin in a calcium-independent manner. Has no direct effect on actin depolymerization. Acts as a chaperone for ALOX5 (5LO), influencing both its stability and activity in leukotrienes synthesis. The polypeptide is Coactosin-like protein (COTL1) (Homo sapiens (Human)).